The sequence spans 494 residues: Protein DETOXIFICATION 21 (494 aa).

Ala2 bears the N-acetylalanine mark. A run of 12 helical transmembrane segments spans residues 40-60 (LWIVAAPAIFTRFSTFGVSII), 73-95 (LAAYSITFTVLLRFSNGILLGMA), 123-143 (IVLTGCTICLTPVYIFSGPIL), 158-178 (IIALWVIGINFSFVPSFTCQM), 188-208 (IIAYVAAVSLGVHVFLSWLLM), 217-237 (GAMTSTLVAFWLPNIAQLLFV), 268-288 (GGMLCLELWYNSILVLLTGNL), 297-317 (ALAICLNINGLEMMIALGFLA), 340-360 (LTAVFTSLSLGIVLFFVFLFL), 384-404 (LLAFSILMNSVQPVLSGVAVG), 416-436 (LACYYLVGIPIGIILGYVVGL), and 441-461 (VWIGMLFGIFVQTCVLTVMTL).

It belongs to the multi antimicrobial extrusion (MATE) (TC 2.A.66.1) family.

The protein localises to the membrane. This chain is Protein DETOXIFICATION 21, found in Arabidopsis thaliana (Mouse-ear cress).